Reading from the N-terminus, the 55-residue chain is Large ribosomal subunit protein bL33B (55 aa).

It belongs to the bacterial ribosomal protein bL33 family.

This is Large ribosomal subunit protein bL33B from Rhodococcus jostii (strain RHA1).